We begin with the raw amino-acid sequence, 393 residues long: tRNA(Met) cytidine acetate ligase (393 aa).

ATP-binding residues include Gly-81, Asn-142, and Arg-167.

Belongs to the TmcAL family.

The protein localises to the cytoplasm. It carries out the reaction cytidine(34) in elongator tRNA(Met) + acetate + ATP = N(4)-acetylcytidine(34) in elongator tRNA(Met) + AMP + diphosphate. Functionally, catalyzes the formation of N(4)-acetylcytidine (ac(4)C) at the wobble position of elongator tRNA(Met), using acetate and ATP as substrates. First activates an acetate ion to form acetyladenylate (Ac-AMP) and then transfers the acetyl group to tRNA to form ac(4)C34. This chain is tRNA(Met) cytidine acetate ligase, found in Bacillus cereus (strain 03BB102).